The primary structure comprises 138 residues: MSGTLLAFDFGTKSIGVAVGQRITGTARPLPAIKAQDGTPDWNLIERLLKEWQPDEIIVGLPLNMDGTEQPLTARARKFANRIHGRFGIEVKLHDERLSTVEARSGLFEQGGYRALNKGKVDSASAVIILESYFEQGY.

Belongs to the YqgF nuclease family.

The protein resides in the cytoplasm. In terms of biological role, could be a nuclease involved in processing of the 5'-end of pre-16S rRNA. The protein is Putative pre-16S rRNA nuclease of Escherichia coli O7:K1 (strain IAI39 / ExPEC).